The primary structure comprises 840 residues: Protein argonaute-2 (840 aa).

Residues 210–329 (PVIEFVCEVL…LPLEVCNIVA (120 aa)) form the PAZ domain. Ser368 is modified (phosphoserine). The Piwi domain occupies 498–799 (LVVVILPGKT…VAFRARYHLV (302 aa)). Residues Asp578 and Asp650 each coordinate a divalent metal cation. Pro681 is modified (4-hydroxyproline). Residue His788 coordinates a divalent metal cation. Ser805, Ser809, Ser812, and Ser815 each carry phosphoserine.

It belongs to the argonaute family. Ago subfamily. As to quaternary structure, interacts with DICER1 through its Piwi domain and with TARBP2 during assembly of the RNA-induced silencing complex (RISC). Together, DICER1, AGO2 and TARBP2 constitute the trimeric RISC loading complex (RLC), or micro-RNA (miRNA) loading complex (miRLC). Within the RLC/miRLC, DICER1 and TARBP2 are required to process precursor miRNAs (pre-miRNAs) to mature miRNAs and then load them onto AGO2. AGO2 bound to the mature miRNA constitutes the minimal RISC and may subsequently dissociate from DICER1 and TARBP2. Note however that the term RISC has also been used to describe the trimeric RLC/miRLC. The formation of RISC complexes containing siRNAs rather than miRNAs appears to occur independently of DICER1. Interacts with AGO1. Also interacts with DDB1, DDX5, DDX6, DDX20, DHX30, DHX36, DDX47, DHX9, ELAVL, FXR1, GEMIN4, HNRNPF, IGF2BP1, ILF3, IMP8, MATR3, PABPC1, PRMT5, P4HA1, P4HB, RBM4, SART3, TNRC6A, TNRC6B, UPF1 and YBX1. Interacts with the P-body components DCP1A and XRN1. Associates with polysomes and messenger ribonucleoproteins (mNRPs). Interacts with RBM4; the interaction is modulated under stress-induced conditions, occurs under both cell proliferation and differentiation conditions and in an RNA- and phosphorylation-independent manner. Interacts with LIMD1, WTIP and AJUBA. Interacts with TRIM71; the interaction increases in presence of RNA. Interacts with APOBEC3G in an RNA-dependent manner. Interacts with APOBEC3A, APOBEC3C, APOBEC3F and APOBEC3H. Interacts with DICER1, TARBP2, EIF6, MOV10 and RPL7A (60S ribosome subunit); they form a large RNA-induced silencing complex (RISC). Interacts with FMR1. Interacts with ZFP36. Interacts with RC3H1; the interaction is RNA independent. Found in a complex composed of AGO2, CHD7 and ARB2A. Interacts with SND1 and SYT11. Interacts with CLNK. Interacts with GARRE1. Hydroxylated. 4-hydroxylation appears to enhance protein stability but is not required for miRNA-binding or endonuclease activity. Post-translationally, ubiquitinated on surface-exposed lysines by a SCF-like E3 ubiquitin-protein ligase complex containing ZSWIM8 during target-directed microRNA degradation (TDMD), a process that mediates degradation of microRNAs (miRNAs). Ubiquitination by the SCF-like E3 ubiquitin-protein ligase complex containing ZSWIM8 leads to its subsequent degradation, thereby exposing miRNAs for degradation. ZSWIM8 recognizes and binds AGO2 when it is engaged with a TDMD target. In terms of processing, phosphorylation at Ser-368 by AKT3; leads to up-regulate translational repression of microRNA target and down-regulate endonucleolytic cleavage. A phosphorylation cycle of C-terminal serine cluster (Ser-805-Ser-815) regulates the release of target mRNAs. Target-binding leads to phosphorylation of these residues by CSNK1A1, which reduces the affinity of AGO2 for mRNA and enables target release. The ANKRD52-PPP6C phosphatase complex dephosphorylates the residues, which primes AGO2 for binding a new target.

It localises to the cytoplasm. The protein resides in the P-body. Its subcellular location is the nucleus. It catalyses the reaction Endonucleolytic cleavage to 5'-phosphomonoester.. Functionally, required for RNA-mediated gene silencing (RNAi) by the RNA-induced silencing complex (RISC). The 'minimal RISC' appears to include AGO2 bound to a short guide RNA such as a microRNA (miRNA) or short interfering RNA (siRNA). These guide RNAs direct RISC to complementary mRNAs that are targets for RISC-mediated gene silencing. The precise mechanism of gene silencing depends on the degree of complementarity between the miRNA or siRNA and its target. Binding of RISC to a perfectly complementary mRNA generally results in silencing due to endonucleolytic cleavage of the mRNA specifically by AGO2. Binding of RISC to a partially complementary mRNA results in silencing through inhibition of translation, and this is independent of endonuclease activity. May inhibit translation initiation by binding to the 7-methylguanosine cap, thereby preventing the recruitment of the translation initiation factor eIF4-E. May also inhibit translation initiation via interaction with EIF6, which itself binds to the 60S ribosomal subunit and prevents its association with the 40S ribosomal subunit. The inhibition of translational initiation leads to the accumulation of the affected mRNA in cytoplasmic processing bodies (P-bodies), where mRNA degradation may subsequently occur. In some cases RISC-mediated translational repression is also observed for miRNAs that perfectly match the 3' untranslated region (3'-UTR). Can also up-regulate the translation of specific mRNAs under certain growth conditions. Binds to the AU element of the 3'-UTR of the TNF (TNF-alpha) mRNA and up-regulates translation under conditions of serum starvation. Also required for transcriptional gene silencing (TGS), in which short RNAs known as antigene RNAs or agRNAs direct the transcriptional repression of complementary promoter regions. The polypeptide is Protein argonaute-2 (AGO2) (Oryctolagus cuniculus (Rabbit)).